The following is a 43-amino-acid chain: Potassium channel toxin gamma-KTx 3.2 (43 aa).

Intrachain disulfides connect Cys5–Cys23, Cys11–Cys34, Cys20–Cys39, and Cys24–Cys41.

This sequence belongs to the ergtoxin family. Gamma-KTx 3 subfamily. As to expression, expressed by the venom gland.

Its subcellular location is the secreted. Blocks Kv11/ERG potassium channels. In Centruroides elegans (Bark scorpion), this protein is Potassium channel toxin gamma-KTx 3.2.